The primary structure comprises 223 residues: Cytotoxic T-lymphocyte protein 4 (223 aa).

A signal peptide spans 1 to 35; that stretch reads MACLGFQRHKAQLNLATRTWPCTLLFFLLFIPVFC. At 36–161 the chain is on the extracellular side; that stretch reads KAMHVAQPAV…IDPEPCPDSD (126 aa). The Ig-like V-type domain occupies 39–140; it reads HVAQPAVVLA…VELMYPPPYY (102 aa). Positions 46-50 are homodimerization; that stretch reads VLASS. Cystine bridges form between Cys-58–Cys-129 and Cys-85–Cys-103. Asn-113 carries an N-linked (GlcNAc...) asparagine glycan. Positions 134 to 139 are important for interaction with CD80 and CD86; sequence MYPPPY. The N-linked (GlcNAc...) asparagine glycan is linked to Asn-145. The homodimerization stretch occupies residues 150–155; that stretch reads YVIDPE. The chain crosses the membrane as a helical span at residues 162 to 182; that stretch reads FLLWILAAVSSGLFFYSFLLT. Topologically, residues 183–223 are cytoplasmic; the sequence is AVSLSKMLKKRSPLTTGVYVKMPPTEPECEKQFQPYFIPIN. Position 201 is a phosphotyrosine; by TXK and JAK2 (Tyr-201).

Homodimer; disulfide-linked. Binds to CD80/B7-1 and CD86/B7.2. Interacts with ICOSLG. N-glycosylation is important for dimerization. In terms of processing, phosphorylation at Tyr-201 prevents binding to the AP-2 adapter complex, blocks endocytosis, and leads to retention of CTLA4 on the cell surface. In terms of tissue distribution, widely expressed with highest levels in lymphoid tissues. Detected in activated T-cells where expression levels are 30- to 50-fold less than CD28, the stimulatory coreceptor, on the cell surface following activation.

It is found in the cell membrane. Functionally, inhibitory receptor acting as a major negative regulator of T-cell responses. The affinity of CTLA4 for its natural B7 family ligands, CD80 and CD86, is considerably stronger than the affinity of their cognate stimulatory coreceptor CD28. The polypeptide is Cytotoxic T-lymphocyte protein 4 (CTLA4) (Homo sapiens (Human)).